The primary structure comprises 284 residues: 2-dehydro-3-deoxyphosphooctonate aldolase (284 aa).

This sequence belongs to the KdsA family.

The protein localises to the cytoplasm. The enzyme catalyses D-arabinose 5-phosphate + phosphoenolpyruvate + H2O = 3-deoxy-alpha-D-manno-2-octulosonate-8-phosphate + phosphate. It functions in the pathway carbohydrate biosynthesis; 3-deoxy-D-manno-octulosonate biosynthesis; 3-deoxy-D-manno-octulosonate from D-ribulose 5-phosphate: step 2/3. Its pathway is bacterial outer membrane biogenesis; lipopolysaccharide biosynthesis. This Escherichia coli O6:H1 (strain CFT073 / ATCC 700928 / UPEC) protein is 2-dehydro-3-deoxyphosphooctonate aldolase.